Consider the following 129-residue polypeptide: Virion-associated protein (129 aa).

2 coiled-coil regions span residues 1 to 31 (MANL…ILEL) and 38 to 59 (TKES…LIND). The tract at residues 122–129 (PAGWPNQF) is capsid binding.

Belongs to the caulimovirus ORF III family. As to quaternary structure, homotetramer, through coiled-coil domain. Homotrimer when interacts with icosehadral capsid. Interacts with capsid protein, and with Movement protein.

It localises to the virion. Its subcellular location is the host cell junction. The protein localises to the host plasmodesma. Plays a role in virus cell-to-cell and plant-to-plant transmission. Interacts with virion icosahedral capsid and movement protein, thereby facilitating virion cell-to-cell transmission through plasmodesmata opened by viral movement protein. Also interacts with aphid transmission factor, attaching the virion to aphid stylet when the animal feeds on an virus infected plant. Aphid saliva may later detach the virion, inducing release of infectious particles when the animal feeds on a new plant. The sequence is that of Virion-associated protein from Arabidopsis thaliana (Mouse-ear cress).